The chain runs to 163 residues: Neurotrophin-3 (163 aa).

A signal peptide spans 1 to 3 (IQS). Positions 4-119 (TSMDQGILTE…VLNRTSRRKR (116 aa)) are excised as a propeptide. N-linked (GlcNAc...) asparagine glycosylation occurs at N112.

It belongs to the NGF-beta family.

The protein localises to the secreted. Its function is as follows. Seems to promote the survival of visceral and proprioceptive sensory neurons. The sequence is that of Neurotrophin-3 (NTF3) from Eryx conicus (Rough-scaled sand boa).